Here is a 337-residue protein sequence, read N- to C-terminus: Ribose-phosphate pyrophosphokinase 4 (337 aa).

The residue at position 2 (Ser2) is an N-acetylserine. Mg(2+)-binding residues include Asp158 and His160. A binding of phosphoribosylpyrophosphate region spans residues 241–256 (GCHVVIVDDLVQSGGT).

The protein belongs to the ribose-phosphate pyrophosphokinase family.

It carries out the reaction D-ribose 5-phosphate + ATP = 5-phospho-alpha-D-ribose 1-diphosphate + AMP + H(+). This Arabidopsis thaliana (Mouse-ear cress) protein is Ribose-phosphate pyrophosphokinase 4 (PRS4).